Reading from the N-terminus, the 89-residue chain is MKQYIFFLALIVLTATFAEAGKKTEILDKVKKVFSKAKDKVLAGVEDLNNMSELGCPFIDKWCEDHCDSKKLVGKCENFDCSCVKLGGK.

Residues 1 to 20 form the signal peptide; it reads MKQYIFFLALIVLTATFAEA. The propeptide occupies 21 to 39; it reads GKKTEILDKVKKVFSKAKD. The BetaSPN-type CS-alpha/beta domain occupies 53-89; sequence ELGCPFIDKWCEDHCDSKKLVGKCENFDCSCVKLGGK. 3 disulfide bridges follow: Cys-56-Cys-76, Cys-63-Cys-81, and Cys-67-Cys-83.

The protein belongs to the long chain scorpion toxin family. Class 2 subfamily. As to expression, expressed by the venom gland.

It localises to the secreted. Inhibits voltage-gated potassium channel. The chain is Neurotoxin beta-KTx 52.1 from Lychas mucronatus (Chinese swimming scorpion).